We begin with the raw amino-acid sequence, 233 residues long: 7-cyano-7-deazaguanine synthase (233 aa).

An ATP-binding site is contributed by 7–17 (LSGGLDSAVTS). The Zn(2+) site is built by C195, C206, C209, and C212.

This sequence belongs to the QueC family. The cofactor is Zn(2+).

The catalysed reaction is 7-carboxy-7-deazaguanine + NH4(+) + ATP = 7-cyano-7-deazaguanine + ADP + phosphate + H2O + H(+). The protein operates within purine metabolism; 7-cyano-7-deazaguanine biosynthesis. Catalyzes the ATP-dependent conversion of 7-carboxy-7-deazaguanine (CDG) to 7-cyano-7-deazaguanine (preQ(0)). The sequence is that of 7-cyano-7-deazaguanine synthase from Methanococcus maripaludis (strain C5 / ATCC BAA-1333).